Reading from the N-terminus, the 172-residue chain is uncharacterized protein (172 aa).

This is an uncharacterized protein from Saccharomyces cerevisiae (strain ATCC 204508 / S288c) (Baker's yeast).